A 463-amino-acid polypeptide reads, in one-letter code: MKTTLYQKIFDSHLIYEDKNTTPIIYIDLHLIHEVTSPQAFDGLRLKKRLVRNPLKTFATMDHNVSTISRKISDSKKMAKIQMRTLIKNCKDFNIPLYDLKNINQGIVHVIGPEQGMTLPGMTVVCGDSHTSTHGAFGALAFGIGTSEVEHVFATQTILQNRMKNMRISIYGNIKKNIFSKDIILNIINKIGTSGGTGYVVEFSGSVIKKMSMESRMTICNMAIEMGAKSGIIEPDAITYNYLKNKNFVPKNRSWKEYIRKWNNLKSGPKSFFEQDFSINISHISPQITWGTNPSQVIPINGKIPILKDIQDVNVREDTERSLEYMGLKPGTSLLNIPVDKVFIGSCTNSRIEDLRVVASVVQNKKISDNIEALIVPGSGLVKKQAEKEGLDKIFKNAGFQWRHAGCSMCLGMNEDQLKPYERCASTSNRNFEGRQGPKGRTHLMSPWLAAQTALYGKFVHIA.

[4Fe-4S] cluster contacts are provided by Cys347, Cys407, and Cys410.

It belongs to the aconitase/IPM isomerase family. LeuC type 1 subfamily. Heterodimer of LeuC and LeuD. Requires [4Fe-4S] cluster as cofactor.

It carries out the reaction (2R,3S)-3-isopropylmalate = (2S)-2-isopropylmalate. The protein operates within amino-acid biosynthesis; L-leucine biosynthesis; L-leucine from 3-methyl-2-oxobutanoate: step 2/4. Catalyzes the isomerization between 2-isopropylmalate and 3-isopropylmalate, via the formation of 2-isopropylmaleate. This chain is 3-isopropylmalate dehydratase large subunit, found in Buchnera aphidicola subsp. Cinara cedri (strain Cc).